We begin with the raw amino-acid sequence, 146 residues long: Large ribosomal subunit protein uL15 (146 aa).

The interval 1–57 is disordered; it reads MKLHELKPAQGSRKTRNRVGRGSSSGNGKTAGRGQKGQKARSGGNIRSGFEGGQTPL. Residues 23–35 show a composition bias toward gly residues; sequence SSSGNGKTAGRGQ.

It belongs to the universal ribosomal protein uL15 family. As to quaternary structure, part of the 50S ribosomal subunit.

In terms of biological role, binds to the 23S rRNA. The polypeptide is Large ribosomal subunit protein uL15 (Streptococcus mutans serotype c (strain ATCC 700610 / UA159)).